Consider the following 379-residue polypeptide: UDP-4-amino-4-deoxy-L-arabinose--oxoglutarate aminotransferase (379 aa).

Lys-182 carries the post-translational modification N6-(pyridoxal phosphate)lysine.

Belongs to the DegT/DnrJ/EryC1 family. ArnB subfamily. As to quaternary structure, homodimer. It depends on pyridoxal 5'-phosphate as a cofactor.

It catalyses the reaction UDP-4-amino-4-deoxy-beta-L-arabinose + 2-oxoglutarate = UDP-beta-L-threo-pentopyranos-4-ulose + L-glutamate. It participates in nucleotide-sugar biosynthesis; UDP-4-deoxy-4-formamido-beta-L-arabinose biosynthesis; UDP-4-deoxy-4-formamido-beta-L-arabinose from UDP-alpha-D-glucuronate: step 2/3. It functions in the pathway bacterial outer membrane biogenesis; lipopolysaccharide biosynthesis. Its function is as follows. Catalyzes the conversion of UDP-4-keto-arabinose (UDP-Ara4O) to UDP-4-amino-4-deoxy-L-arabinose (UDP-L-Ara4N). The modified arabinose is attached to lipid A and is required for resistance to polymyxin and cationic antimicrobial peptides. This is UDP-4-amino-4-deoxy-L-arabinose--oxoglutarate aminotransferase from Escherichia coli O1:K1 / APEC.